Reading from the N-terminus, the 359-residue chain is Tyrosine-protein phosphatase non-receptor type 7 (359 aa).

Residues 1–34 form a disordered region; it reads MVQACEGRSRAQLPTLSLGADMTQPPPAKAPAKK. The segment at 38–51 is interaction with MAP kinases; sequence LQERRGSSVALMLD. The residue at position 44 (Ser44) is a Phosphoserine. At Thr66 the chain carries Phosphothreonine. Residues Ser93 and Ser143 each carry the phosphoserine modification. In terms of domain architecture, Tyrosine-protein phosphatase spans 97-349; that stretch reads LEEEFLKIPS…QFLHHTLALY (253 aa). Residues Asp257, 290–296, and Gln334 contribute to the substrate site; that span reads CSAGIGR. Cys290 acts as the Phosphocysteine intermediate in catalysis. Position 290 is a cysteine sulfenic acid (-SOH) (Cys290).

This sequence belongs to the protein-tyrosine phosphatase family. Non-receptor class subfamily. Oxidized at active site cysteine. Treatment with pervanadate (vanadate and H(2)O(2)) or with antigen enhanced oxidation of active site cysteine.

It localises to the cytoplasm. Its subcellular location is the cytoskeleton. It carries out the reaction O-phospho-L-tyrosyl-[protein] + H2O = L-tyrosyl-[protein] + phosphate. Inhibited in cells after FCER1A triggering. May play a role in the regulation of T and B-lymphocyte development and signal transduction. This chain is Tyrosine-protein phosphatase non-receptor type 7 (Ptpn7), found in Rattus norvegicus (Rat).